Reading from the N-terminus, the 129-residue chain is Lysozyme C (129 aa).

A C-type lysozyme domain is found at 1–129 (KVFSKCELAH…LSEYLASCNL (129 aa)). Intrachain disulfides connect Cys6-Cys127, Cys30-Cys115, Cys65-Cys80, and Cys76-Cys94. Catalysis depends on residues Glu35 and Asp53. Positions 82, 85, 87, 90, and 91 each coordinate Ca(2+).

Belongs to the glycosyl hydrolase 22 family. As to quaternary structure, monomer. Requires Ca(2+) as cofactor.

It catalyses the reaction Hydrolysis of (1-&gt;4)-beta-linkages between N-acetylmuramic acid and N-acetyl-D-glucosamine residues in a peptidoglycan and between N-acetyl-D-glucosamine residues in chitodextrins.. Functionally, lysozymes have primarily a bacteriolytic function; those in tissues and body fluids are associated with the monocyte-macrophage system and enhance the activity of immunoagents. The polypeptide is Lysozyme C (LYZ) (Equus asinus (Donkey)).